We begin with the raw amino-acid sequence, 94 residues long: Phosphoribosyl-ATP pyrophosphatase (94 aa).

It belongs to the PRA-PH family.

It is found in the cytoplasm. It catalyses the reaction 1-(5-phospho-beta-D-ribosyl)-ATP + H2O = 1-(5-phospho-beta-D-ribosyl)-5'-AMP + diphosphate + H(+). It functions in the pathway amino-acid biosynthesis; L-histidine biosynthesis; L-histidine from 5-phospho-alpha-D-ribose 1-diphosphate: step 2/9. The protein is Phosphoribosyl-ATP pyrophosphatase (hisE) of Sulfurisphaera tokodaii (strain DSM 16993 / JCM 10545 / NBRC 100140 / 7) (Sulfolobus tokodaii).